The primary structure comprises 466 residues: Soluble pyridine nucleotide transhydrogenase (466 aa).

36 to 45 (ERYQNVGGGC) serves as a coordination point for FAD.

Belongs to the class-I pyridine nucleotide-disulfide oxidoreductase family. Requires FAD as cofactor.

It localises to the cytoplasm. It carries out the reaction NAD(+) + NADPH = NADH + NADP(+). Its function is as follows. Conversion of NADPH, generated by peripheral catabolic pathways, to NADH, which can enter the respiratory chain for energy generation. This chain is Soluble pyridine nucleotide transhydrogenase, found in Escherichia coli O127:H6 (strain E2348/69 / EPEC).